Here is a 163-residue protein sequence, read N- to C-terminus: Large ribosomal subunit protein uL13m (163 aa).

N-acetylserine is present on S2. The propeptide occupies 2–4 (SQK).

This sequence belongs to the universal ribosomal protein uL13 family. Component of the mitochondrial large ribosomal subunit (mt-LSU). Mature yeast 74S mitochondrial ribosomes consist of a small (37S) and a large (54S) subunit. The 37S small subunit contains a 15S ribosomal RNA (15S mt-rRNA) and 34 different proteins. The 54S large subunit contains a 21S rRNA (21S mt-rRNA) and 46 different proteins.

Its subcellular location is the mitochondrion. Its function is as follows. Component of the mitochondrial ribosome (mitoribosome), a dedicated translation machinery responsible for the synthesis of mitochondrial genome-encoded proteins, including at least some of the essential transmembrane subunits of the mitochondrial respiratory chain. The mitoribosomes are attached to the mitochondrial inner membrane and translation products are cotranslationally integrated into the membrane. In Saccharomyces cerevisiae (strain ATCC 204508 / S288c) (Baker's yeast), this protein is Large ribosomal subunit protein uL13m (MRPL23).